Here is a 129-residue protein sequence, read N- to C-terminus: DNA-directed RNA polymerase subunit omega (129 aa).

Residues 76 to 100 form a disordered region; it reads EVDEPEPEAVPMIASGDSSGGEDSD.

The protein belongs to the RNA polymerase subunit omega family. The RNAP catalytic core consists of 2 alpha, 1 beta, 1 beta' and 1 omega subunit. When a sigma factor is associated with the core the holoenzyme is formed, which can initiate transcription.

It carries out the reaction RNA(n) + a ribonucleoside 5'-triphosphate = RNA(n+1) + diphosphate. Its function is as follows. Promotes RNA polymerase assembly. Latches the N- and C-terminal regions of the beta' subunit thereby facilitating its interaction with the beta and alpha subunits. The sequence is that of DNA-directed RNA polymerase subunit omega from Xanthobacter autotrophicus (strain ATCC BAA-1158 / Py2).